Reading from the N-terminus, the 274-residue chain is 2,3,4,5-tetrahydropyridine-2,6-dicarboxylate N-succinyltransferase (274 aa).

Substrate-binding residues include Arg-104 and Asp-141.

The protein belongs to the transferase hexapeptide repeat family. As to quaternary structure, homotrimer.

Its subcellular location is the cytoplasm. It carries out the reaction (S)-2,3,4,5-tetrahydrodipicolinate + succinyl-CoA + H2O = (S)-2-succinylamino-6-oxoheptanedioate + CoA. Its pathway is amino-acid biosynthesis; L-lysine biosynthesis via DAP pathway; LL-2,6-diaminopimelate from (S)-tetrahydrodipicolinate (succinylase route): step 1/3. In Sodalis glossinidius (strain morsitans), this protein is 2,3,4,5-tetrahydropyridine-2,6-dicarboxylate N-succinyltransferase.